The chain runs to 279 residues: Shikimate dehydrogenase (NADP(+)) (279 aa).

Residues 19–21 and threonine 66 contribute to the shikimate site; that span reads SFS. The Proton acceptor role is filled by lysine 70. Glutamate 82 contacts NADP(+). The shikimate site is built by asparagine 91 and aspartate 106. NADP(+) is bound by residues 130–134 and leucine 222; that span reads GSGGA. A shikimate-binding site is contributed by tyrosine 224. Glycine 245 is an NADP(+) binding site.

Belongs to the shikimate dehydrogenase family. As to quaternary structure, homodimer.

The enzyme catalyses shikimate + NADP(+) = 3-dehydroshikimate + NADPH + H(+). It participates in metabolic intermediate biosynthesis; chorismate biosynthesis; chorismate from D-erythrose 4-phosphate and phosphoenolpyruvate: step 4/7. Functionally, involved in the biosynthesis of the chorismate, which leads to the biosynthesis of aromatic amino acids. Catalyzes the reversible NADPH linked reduction of 3-dehydroshikimate (DHSA) to yield shikimate (SA). In Methanococcus maripaludis (strain C6 / ATCC BAA-1332), this protein is Shikimate dehydrogenase (NADP(+)).